Consider the following 269-residue polypeptide: MTVLDSILDGVRADVAAREAVLDFAAVKAAAAAAPPALDAAAALLEPGIGVIAEVKRASPSKGALADIADPAELAAAYQAGGARVISVLTEERRFQGSLADLDAVRRAVSIPILRKDFIVGPYQIHEARAHGADMVLLIVAALEQDALASLIDRTESLGMTALVEVHTEEEANRAIEAGAKVIGVNARNLKTLEVDKNTFGEIAPGLPTEIIKIAESGVRGTADLLAYAGAGADAVLVGEGLVTSGDPRKAVADLVNAGAHPSCPKPSR.

This sequence belongs to the TrpC family.

The enzyme catalyses 1-(2-carboxyphenylamino)-1-deoxy-D-ribulose 5-phosphate + H(+) = (1S,2R)-1-C-(indol-3-yl)glycerol 3-phosphate + CO2 + H2O. Its pathway is amino-acid biosynthesis; L-tryptophan biosynthesis; L-tryptophan from chorismate: step 4/5. The chain is Indole-3-glycerol phosphate synthase from Rhodococcus opacus (strain B4).